Consider the following 248-residue polypeptide: MGGSTSKNSFKNTTNIISNSIFNQMQSCISMLDGKNYIGVFGDGNILNHVFQDLNLSLNTSCVQKHVNEENFITNLSNQITQNLKDQEVALTQWMDAGTHDQKTDIEENIKVNLTTTLIQNCVSSLSGMNVLVVKGNGNIVENATQKQSQQIISNCLQGSKQAIDTTTGITNTVNQYSHYTSKNFFDFIADAISAVFKNIMVAAVVIVLIIVGFIAVFYFLHSRHRHEEEEEAEPLISNKVLKNAAVS.

Glycine 2 is lipidated: N-myristoyl glycine; by host. At 2-199 (GGSTSKNSFK…ADAISAVFKN (198 aa)) the chain is on the cytoplasmic side. The chain crosses the membrane as a helical span at residues 200–220 (IMVAAVVIVLIIVGFIAVFYF). Over 221-248 (LHSRHRHEEEEEAEPLISNKVLKNAAVS) the chain is Extracellular.

It belongs to the asfivirus E248R family. As to quaternary structure, interacts with A151R.

The protein resides in the host membrane. It localises to the virion membrane. Functionally, essential for viral fusion with host endosomal membrane and core release. This is Inner membrane protein pE248R from Ornithodoros (relapsing fever ticks).